The primary structure comprises 456 residues: Enolase (456 aa).

Position 164 (Gln164) interacts with (2R)-2-phosphoglycerate. The active-site Proton donor is the Glu207. Mg(2+) contacts are provided by Asp244, Glu287, and Asp314. Residues Lys339, Arg368, Ser369, and Lys390 each coordinate (2R)-2-phosphoglycerate. Lys339 serves as the catalytic Proton acceptor.

This sequence belongs to the enolase family. In terms of assembly, component of the RNA degradosome, a multiprotein complex involved in RNA processing and mRNA degradation. Requires Mg(2+) as cofactor.

It is found in the cytoplasm. The protein localises to the secreted. Its subcellular location is the cell surface. The catalysed reaction is (2R)-2-phosphoglycerate = phosphoenolpyruvate + H2O. Its pathway is carbohydrate degradation; glycolysis; pyruvate from D-glyceraldehyde 3-phosphate: step 4/5. Its function is as follows. Catalyzes the reversible conversion of 2-phosphoglycerate (2-PG) into phosphoenolpyruvate (PEP). It is essential for the degradation of carbohydrates via glycolysis. This is Enolase from Francisella tularensis subsp. holarctica (strain LVS).